The following is a 963-amino-acid chain: Protein translocase subunit SecA (963 aa).

ATP is bound by residues Q87, 105-109 (GEGKT), and D512. Disordered regions lie at residues 868–909 (GPVM…EDFT) and 924–963 (QFVG…CHGS). The span at 874–886 (PDEEEDGDEDSVE) shows a compositional bias: acidic residues. C949, C951, C960, and H961 together coordinate Zn(2+).

Belongs to the SecA family. In terms of assembly, monomer and homodimer. Part of the essential Sec protein translocation apparatus which comprises SecA, SecYEG and auxiliary proteins SecDF. Other proteins may also be involved. Zn(2+) is required as a cofactor.

Its subcellular location is the cell inner membrane. It localises to the cytoplasm. The catalysed reaction is ATP + H2O + cellular proteinSide 1 = ADP + phosphate + cellular proteinSide 2.. Part of the Sec protein translocase complex. Interacts with the SecYEG preprotein conducting channel. Has a central role in coupling the hydrolysis of ATP to the transfer of proteins into and across the cell membrane, serving as an ATP-driven molecular motor driving the stepwise translocation of polypeptide chains across the membrane. This Solibacter usitatus (strain Ellin6076) protein is Protein translocase subunit SecA.